A 1029-amino-acid chain; its full sequence is MASEAVKVVVRCRPMNQRERELRCQPVVTVDCARAQCCIQNPGAADEPPKQFTFDGAYHVDHVTEQIYNEIAYPLVEGVTEGYNGTIFAYGQTGSGKSFTMQGLPDPPSQRGIIPRAFEHVFESVQCAENTKFLVRASYLEIYNEDVRDLLGADTKQKLELKEHPEKGVYVKGLSMHTVHSVAQCEHIMETGWKNRSVGYTLMNKDSSRSHSIFTISIEMSAVDERGKDHLRAGKLNLVDLAGSERQSKTGATGERLKEATKINLSLSALGNVISALVDGRCKHVPYRDSKLTRLLQDSLGGNTKTLMVACLSPADNNYDETLSTLRYANRAKNIRNKPRINEDPKDALLREYQEEIKKLKAILTQQMSPSSLSALLSRQVPPDPVQVEEKLLPQPVIQHDVEAEKQLIREEYEERLARLKADYKAEQESRARLEEDITAMRNSYDVRLSTLEENLRKETEAVLQVGVLYKAEVMSRAEFASSAEYPPAFQYETVVKPKVFSTTDTLPSDDVSKTQVSSRFAELPKVEPSKSEISLGSSESSSLEETSVSEAFPGPEEPSNVEVSMPTEESRSRYFLDECLGQEAAGHLLGEQNYLPQEEPQEVPLQGLLGLQDPFAEVEAKLARLSSTVARTDAPQADVPKVPVQVPAPTDLLEPSDARPEAEAADDFPPRPEVDLASEVALEVVRTAEPGVWLEAQAPVALVAQPEPLPATAGVKRESVGMEVAVLTDDPLPVVDQQQVLARLQLLEQQVVGGEQAKNKDLKEKHKRRKRYADERRKQLVAALQNSDEDSGDWVLLNVYDSIQEEVRAKSKLLEKMQRKLRAAEVEIKDLQSEFQLEKIDYLATIRRQERDSMLLQQLLEQVQPLIRRDCNYSNLEKILRESCWDEDNGFWKIPHPVITKTSLPVAVSTGPQNKPARKTSAADNGEPNMEDDRYRLMLSRSNSENIASNYFRSKRASQILSTDARKSLTHHNSPPGLSCPLSNNSAIPPTQAPEMPQPRPFRLESLDIPFTKAKRKKSKSNFGSEPL.

The region spanning 5-335 (AVKVVVRCRP…LRYANRAKNI (331 aa)) is the Kinesin motor domain. 91–98 (GQTGSGKS) is an ATP binding site. Positions 346 to 462 (KDALLREYQE…EENLRKETEA (117 aa)) form a coiled coil. Disordered stretches follow at residues 523 to 569 (ELPK…MPTE) and 647 to 673 (VPAPTDLLEPSDARPEAEAADDFPPRP). The span at 532 to 551 (SEISLGSSESSSLEETSVSE) shows a compositional bias: low complexity. A compositionally biased stretch (basic and acidic residues) spans 657 to 673 (SDARPEAEAADDFPPRP). Positions 739 to 846 (QQVLARLQLL…QLEKIDYLAT (108 aa)) form a coiled coil. Disordered regions lie at residues 908-931 (AVSTGPQNKPARKTSAADNGEPNM) and 968-1029 (KSLT…SEPL).

Belongs to the TRAFAC class myosin-kinesin ATPase superfamily. Kinesin family. Homodimer. Interacts with APBA1 (via PDZ domain); the interaction is direct and is required for association of KIF17 with the cargo that is to be transported. Interacts with IFT B complex components IFT52 and IFT57. Interacts with IFT70B. Interacts with PIWIL1. Interacts with TBATA.

It is found in the cytoplasm. It localises to the cytoskeleton. The protein localises to the cell projection. The protein resides in the cilium. Its subcellular location is the dendrite. Functionally, dendrite-specific motor protein which, in association with the Apba1-containing complex (LIN-10-LIN-2-LIN-7 complex), transports vesicles containing N-methyl-D-aspartate (NMDA) receptor subunit NR2B along microtubules. This is Kinesin-like protein KIF17 (KIF17) from Homo sapiens (Human).